The chain runs to 25 residues: Neuromedin-U-25 (25 aa).

Gln18 is modified (pyrrolidone carboxylic acid). Position 25 is an asparagine amide (Asn25).

This sequence belongs to the NmU family.

Its subcellular location is the secreted. Stimulates uterine smooth muscle contraction and causes selective vasoconstriction. The protein is Neuromedin-U-25 (NMU) of Canis lupus familiaris (Dog).